Consider the following 369-residue polypeptide: MVKLSIVLTPRFLSHDQGQLTKELQQHVKSVTCPCEYLRKVINTLADHRHRGTDFGGSPWLLIITVFLRSYKFAISLCTSYLCVSFLKTIFPSQNGHDGSTDVQQRARRSNRRRQEGIKIVLEDIFTLWRQVETKVRAKICKMKVTTKVNRHDKINGKRKTAKEHLRKLSMKEREHGEKERQVSEAEENGKLDMKEIHTYMEMFQRAQALRRRAEDYYRCKITPSARKPLCNRVRMAAAEHRHSSGLPYWPYLTAETLKNRMGHQPPPPTQQHSIIDNSLSLKTPPECLLTPLPPSALPSADDNLKTPAECLLYPLPPSADDNLKTPPECLLTPLPPSAPPSADDNLKTPPKCVCSLPFHPQRMIISRN.

The interval 325 to 346 (KTPPECLLTPLPPSAPPSADDN) is disordered.

This sequence belongs to the NPIP family.

This chain is Nuclear pore complex-interacting protein family member A2 (NPIPA2), found in Homo sapiens (Human).